A 300-amino-acid polypeptide reads, in one-letter code: TLR adapter interacting with SLC15A4 on the lysosome (300 aa).

The pLxIS motif signature appears at 289-293 (SLHIS). S293 is modified (phosphoserine).

Interacts (via pLxIS motif) with IRF5; leading to IRF5 activation. Interacts with SLC15A4; leading to its recruitment to endolysosome. The phosphorylated pLxIS motif constitutes an IRF5-binding motif, leading to recruitment of the transcription factor IRF5 to induce type-I interferons and other cytokines.

The protein localises to the lysosome membrane. It is found in the endosome membrane. It localises to the nucleus. The protein resides in the cytoplasm. Functionally, innate immune adapter that mediates the recruitment and activation of IRF5 downstream of endolysosomal toll-like receptors TLR7, TLR8 and TLR9. Following recruitment to endolysosome by SLC15A4 downstream of TLR7, TLR8 and TLR9, specifically recruits IRF5 transcription factor via its pLxIS motif, leading to IRF5 activation and subsequent expression of type I interferons. Plays a role in the regulation of endolysosomal pH in immune cells such as B-cells, dendritic cells and monocytes. The sequence is that of TLR adapter interacting with SLC15A4 on the lysosome from Bos taurus (Bovine).